A 581-amino-acid polypeptide reads, in one-letter code: Zinc metalloproteinase nas-36 (581 aa).

Positions 1–95 are excised as a propeptide; it reads MKEIAHSQAY…FRGANEKGKR (95 aa). An N-linked (GlcNAc...) asparagine glycan is attached at Asn-67. The Peptidase M12A domain maps to 97–290; the sequence is AAEYDAKWFQ…IKLINEAYCK (194 aa). 5 cysteine pairs are disulfide-bonded: Cys-137–Cys-289, Cys-159–Cys-178, Cys-293–Cys-313, Cys-315–Cys-324, and Cys-336–Cys-364. Position 186 (His-186) interacts with Zn(2+). The active site involves Glu-187. Residues His-190 and His-196 each coordinate Zn(2+). One can recognise an EGF-like domain in the interval 285 to 325; it reads NEAYCKGDCKEKNECKNGGYLNPSNCQSCLCPSGFGGSKCE. One can recognise a CUB domain in the interval 336–449; sequence CGGTLKAIID…TGFKLKFRKT (114 aa). The N-linked (GlcNAc...) asparagine glycan is linked to Asn-418. The TSP type-1 domain maps to 474 to 523; sequence NDIWSEWGEWSQCSRSCGACGIKSRLRICKTAQCSGKVQQFLTCNLQACP. 3 cysteine pairs are disulfide-bonded: Cys-486–Cys-517, Cys-490–Cys-522, and Cys-502–Cys-507.

The cofactor is Zn(2+).

It is found in the secreted. Its activity is regulated as follows. Inhibited by 1,10-phenanthroline. Functionally, metalloprotease. Involved in molting, a process during larval stages in which a new cuticle is formed and the old cuticle is shed. This Brugia malayi (Filarial nematode worm) protein is Zinc metalloproteinase nas-36.